Consider the following 86-residue polypeptide: Neurotoxin-like protein pMD18-NTL1/2/4/5 (86 aa).

The first 21 residues, 1-21 (MKTLLLTLVVLTIACLDLGYT), serve as a signal peptide directing secretion. 4 disulfides stabilise this stretch: cysteine 24–cysteine 45, cysteine 38–cysteine 62, cysteine 66–cysteine 78, and cysteine 79–cysteine 84.

It belongs to the three-finger toxin family. Short-chain subfamily. Orphan group IX sub-subfamily. As to expression, expressed by the venom gland.

It localises to the secreted. This is Neurotoxin-like protein pMD18-NTL1/2/4/5 from Bungarus multicinctus (Many-banded krait).